The following is a 374-amino-acid chain: Translocating chain-associated membrane protein 1 (374 aa).

Residues 1-29 are Cytoplasmic-facing; the sequence is MAIRKKSNKNPPLLSHEFLLQNHADIVSC. The helical transmembrane segment at 30–50 threads the bilayer; the sequence is LAMLFLLGLMFEVTAKGAIIF. Topologically, residues 51–76 are lumenal; it reads VALQYNVTRPATEEQATESASLYHYG. Asn56 carries an N-linked (GlcNAc...) asparagine glycan. The helical transmembrane segment at 77-97 threads the bilayer; the sequence is IKDLATVLFYMLVAIIIHAII. Topologically, residues 98-121 are cytoplasmic; that stretch reads QEYVLDKINRRMHFSKTKHSKFNE. A TLC domain is found at 117–326; it reads SKFNESGQLS…NFQLRRWREH (210 aa). The helical transmembrane segment at 122–142 threads the bilayer; that stretch reads SGQLSAFYLFACVWGTFILIS. The Lumenal portion of the chain corresponds to 143–159; it reads ENYISDPTILWRAYPHN. The helical transmembrane segment at 160 to 180 threads the bilayer; it reads LMTFQTKFFYISQLAYWLHAF. The Cytoplasmic segment spans residues 181 to 192; it reads PELYFQKTKKED. A helical membrane pass occupies residues 193–213; that stretch reads IPRQLVYIGLYLFHIAGAYLL. The Lumenal portion of the chain corresponds to 214–217; sequence NLNH. The helical transmembrane segment at 218-238 threads the bilayer; that stretch reads LGLVLLVLHYFVEFLFHISRL. Residues 239 to 251 lie on the Cytoplasmic side of the membrane; sequence FYFSDEKYQKGFS. The chain crosses the membrane as a helical span at residues 252-272; sequence LWAVLFVLGRLLTLILSVLTV. Residues 273–297 lie on the Lumenal side of the membrane; it reads GFGLARAENQKLDFSTGNFNVLAVR. A helical membrane pass occupies residues 298 to 318; the sequence is IAVLASICITQAFMMWKFINF. The Cytoplasmic segment spans residues 319–374; the sequence is QLRRWREHSAFQAPPVKRKPAVTKGRSSRKGTENGVNGTVTSNGADSPRNRKEKSS. The tract at residues 333-374 is disordered; that stretch reads PVKRKPAVTKGRSSRKGTENGVNGTVTSNGADSPRNRKEKSS. Over residues 334-347 the composition is skewed to basic residues; the sequence is VKRKPAVTKGRSSR. Residues 352 to 363 show a composition bias toward polar residues; that stretch reads NGVNGTVTSNGA. Ser365 carries the post-translational modification Phosphoserine.

It belongs to the TRAM family. Interacts with SEC61B. May interact with Derlin-1/DERL1. N-glycosylated.

Its subcellular location is the endoplasmic reticulum membrane. Involved in the translocation of nascent protein chains into or through the endoplasmic reticulum (ER) membrane by facilitating the proper chain positioning at the SEC61 channel. Regulates the exposure of nascent secretory protein chain to the cytosol during translocation into the ER. May affect the phospholipid bilayer in the vicinity of the lateral gate of the SEC61 channel, thereby facilitating ER protein transport. Intimately associates with transmembrane (TM) domain of nascent membrane proteins during the entire integration process into the ER membrane. Associates with the second TM domain of G-protein-coupled receptor opsin/OPSD nascent chain in the ER membrane, which may facilitate its integration into the membrane. Under conditions of ER stress, participates in the disposal of misfolded ER membrane proteins during the unfolded protein response (UPR), an integrated stress response (ISR) pathway, by selectively retrotranslocating misfolded ER-membrane proteins from the ER into the cytosol where they are ubiquitinated and degraded by the proteasome. This Mus musculus (Mouse) protein is Translocating chain-associated membrane protein 1.